We begin with the raw amino-acid sequence, 651 residues long: Chaperone protein HtpG (651 aa).

The tract at residues 1–353 (MAPHVEQLEF…AQDMSLNVSR (353 aa)) is a; substrate-binding. The segment at 354-569 (EILQQDRQIR…TFGITPALAR (216 aa)) is b. The interval 570–651 (MYRASGQPVP…RLTRMVGEQS (82 aa)) is c.

Belongs to the heat shock protein 90 family. As to quaternary structure, homodimer.

It localises to the cytoplasm. Its function is as follows. Molecular chaperone. Has ATPase activity. The polypeptide is Chaperone protein HtpG (Mycolicibacterium gilvum (strain PYR-GCK) (Mycobacterium gilvum (strain PYR-GCK))).